The primary structure comprises 901 residues: Protein SOK1 (901 aa).

Disordered regions lie at residues 1 to 87, 106 to 139, and 162 to 231; these read MDQP…QNII, RSSGVITPSMSLNASTNATNNDSSGNSANSSDLK, and NDDN…NASN. The span at 10-51 shows a compositional bias: low complexity; sequence PTTASNPAPSSTNSSSAPSATNSKQERSSSSLSKPSSVVPSK. Serine 40 and serine 53 each carry phosphoserine. Polar residues-rich tracts occupy residues 74 to 87 and 106 to 115; these read GDTSTLDGSSQNII and RSSGVITPSM. A compositionally biased stretch (low complexity) spans 116 to 138; sequence SLNASTNATNNDSSGNSANSSDL. Phosphoserine is present on residues serine 191 and serine 193. Over residues 220–231 the composition is skewed to polar residues; it reads AAQQQPPGNASN. Serine 245 carries the phosphoserine modification.

This sequence belongs to the TCP11 family.

It is found in the nucleus. Functionally, high copy suppressor of a cyclic AMP-dependent protein kinase mutant. The protein is Protein SOK1 (SOK1) of Saccharomyces cerevisiae (strain ATCC 204508 / S288c) (Baker's yeast).